A 219-amino-acid polypeptide reads, in one-letter code: Clathrin light chain (219 aa).

Residues 32-136 (AEITGGSASA…KKEELRQQSK (105 aa)) are disordered. Residues 96–158 (PPPSREEPEK…SISKTKLASR (63 aa)) form an involved in binding clathrin heavy chain region. Positions 99-136 (SREEPEKIRKWREEQKQRLEEKDIEEERKKEELRQQSK) are enriched in basic and acidic residues.

Belongs to the clathrin light chain family. In terms of assembly, clathrin coats are formed from molecules containing 3 heavy chains and 3 light chains.

Its subcellular location is the cytoplasmic vesicle membrane. It is found in the membrane. It localises to the coated pit. Its function is as follows. Clathrin is the major protein of the polyhedral coat of coated pits and vesicles. This Drosophila melanogaster (Fruit fly) protein is Clathrin light chain (Clc).